A 137-amino-acid polypeptide reads, in one-letter code: 3-hydroxyacyl-[acyl-carrier-protein] dehydratase FabZ (137 aa).

His-46 is a catalytic residue.

Belongs to the thioester dehydratase family. FabZ subfamily.

It is found in the cytoplasm. The catalysed reaction is a (3R)-hydroxyacyl-[ACP] = a (2E)-enoyl-[ACP] + H2O. Its function is as follows. Involved in unsaturated fatty acids biosynthesis. Catalyzes the dehydration of short chain beta-hydroxyacyl-ACPs and long chain saturated and unsaturated beta-hydroxyacyl-ACPs. In Thermotoga maritima (strain ATCC 43589 / DSM 3109 / JCM 10099 / NBRC 100826 / MSB8), this protein is 3-hydroxyacyl-[acyl-carrier-protein] dehydratase FabZ.